Here is a 404-residue protein sequence, read N- to C-terminus: Deoxyguanosinetriphosphate triphosphohydrolase-like protein 1 (404 aa).

The HD domain maps to 75–219 (RLTHSIEVAQ…AAIADDIAYN (145 aa)).

The protein belongs to the dGTPase family. Type 2 subfamily.

The polypeptide is Deoxyguanosinetriphosphate triphosphohydrolase-like protein 1 (Mesorhizobium japonicum (strain LMG 29417 / CECT 9101 / MAFF 303099) (Mesorhizobium loti (strain MAFF 303099))).